We begin with the raw amino-acid sequence, 218 residues long: Protein Syd (218 aa).

It belongs to the Syd family.

The protein resides in the cell inner membrane. In terms of biological role, interacts with the SecY protein in vivo. May bind preferentially to an uncomplexed state of SecY, thus functioning either as a chelating agent for excess SecY in the cell or as a regulatory factor that negatively controls the translocase function. The protein is Protein Syd of Shewanella denitrificans (strain OS217 / ATCC BAA-1090 / DSM 15013).